The sequence spans 777 residues: Subtilisin-like protease SBT1.4 (777 aa).

An N-terminal signal peptide occupies residues 1–25; sequence MAKLSLSSIFFVFPLLLCFFSPSSS. A propeptide spans 26–110 (activation peptide); it reads SSDGLESYIV…VIPDQAREIH (85 aa). Residues 32–110 form the Inhibitor I9 domain; the sequence is SYIVHVQRSH…VIPDQAREIH (79 aa). Positions 115-614 constitute a Peptidase S8 domain; that stretch reads PAFLGFSQNS…AGHVDPNKAL (500 aa). The active-site Charge relay system is the Asp-142. Asn-198 carries N-linked (GlcNAc...) asparagine glycosylation. Residues 199-223 form a disordered region; the sequence is GTKKHAAKESRSPRDTEGHGTHTAS. Residues 205–218 show a composition bias toward basic and acidic residues; the sequence is AKESRSPRDTEGHG. Residue His-217 is the Charge relay system of the active site. 2 N-linked (GlcNAc...) asparagine glycosylation sites follow: Asn-232 and Asn-395. Residues 376–461 form the PA domain; that stretch reads LSLVYSGDCG…VGAKAGDQIR (86 aa). Ser-546 functions as the Charge relay system in the catalytic mechanism.

It belongs to the peptidase S8 family.

Its subcellular location is the secreted. In Arabidopsis thaliana (Mouse-ear cress), this protein is Subtilisin-like protease SBT1.4.